The sequence spans 433 residues: Serine--tRNA ligase (433 aa).

Position 235–237 (T235–E237) interacts with L-serine. R266–E268 contributes to the ATP binding site. E289 serves as a coordination point for L-serine. An ATP-binding site is contributed by E353–S356. An L-serine-binding site is contributed by S388.

It belongs to the class-II aminoacyl-tRNA synthetase family. Type-1 seryl-tRNA synthetase subfamily. In terms of assembly, homodimer. The tRNA molecule binds across the dimer.

The protein localises to the cytoplasm. It catalyses the reaction tRNA(Ser) + L-serine + ATP = L-seryl-tRNA(Ser) + AMP + diphosphate + H(+). The catalysed reaction is tRNA(Sec) + L-serine + ATP = L-seryl-tRNA(Sec) + AMP + diphosphate + H(+). It participates in aminoacyl-tRNA biosynthesis; selenocysteinyl-tRNA(Sec) biosynthesis; L-seryl-tRNA(Sec) from L-serine and tRNA(Sec): step 1/1. Functionally, catalyzes the attachment of serine to tRNA(Ser). Is also able to aminoacylate tRNA(Sec) with serine, to form the misacylated tRNA L-seryl-tRNA(Sec), which will be further converted into selenocysteinyl-tRNA(Sec). This Burkholderia ambifaria (strain MC40-6) protein is Serine--tRNA ligase.